A 296-amino-acid chain; its full sequence is Cytidine deaminase (296 aa).

2 consecutive CMP/dCMP-type deaminase domains span residues 52-172 (TAVE…FGPK) and 191-296 (THAD…YFAL). Residue 93-95 (NQE) participates in substrate binding. H106 serves as a coordination point for Zn(2+). Catalysis depends on E108, which acts as the Proton donor. Zn(2+)-binding residues include C133 and C136.

The protein belongs to the cytidine and deoxycytidylate deaminase family. Homodimer. Zn(2+) is required as a cofactor.

The enzyme catalyses cytidine + H2O + H(+) = uridine + NH4(+). It catalyses the reaction 2'-deoxycytidine + H2O + H(+) = 2'-deoxyuridine + NH4(+). This enzyme scavenges exogenous and endogenous cytidine and 2'-deoxycytidine for UMP synthesis. This is Cytidine deaminase from Actinobacillus succinogenes (strain ATCC 55618 / DSM 22257 / CCUG 43843 / 130Z).